A 93-amino-acid chain; its full sequence is Neurophysin 1 (93 aa).

7 disulfides stabilise this stretch: cysteine 10–cysteine 54, cysteine 13–cysteine 27, cysteine 21–cysteine 44, cysteine 28–cysteine 34, cysteine 61–cysteine 74, cysteine 68–cysteine 86, and cysteine 75–cysteine 80.

It belongs to the vasopressin/oxytocin family.

Neurophysin 1 specifically binds oxytocin. The polypeptide is Neurophysin 1 (Struthio camelus (Common ostrich)).